A 630-amino-acid polypeptide reads, in one-letter code: MITNLADYPLLSQINIPEDLRNMPQEQLTRISNELRSFLLNSVSKSSGHFASGLGTIELTVALHYVYNTPFDHLIWDVGHQAYPHKILTGRRDQLHTIRQKGGLHPFPWREESEYDTLSVGHSSTSISAALGLAVAAEKEAKNRKTVAVIGDGAMTAGMAFEALNHAGDIKKDMLIILNDNDMSISKNVGALNNHLAKLLSGSIFTGFRESSKKLLGNIPPIKELASRAEEHLKGMVVPSTFFEELGFNYIGPIDGHDVESLVTTIKNMRNLKGPQFLHVVTTKGKGYQAAEQDPIKYHAVPKFNPEETNLPQSKPSLPTYSKIFGDWLCKTAEIDKKLVAVTPAMAEGSGMVEFSQRFPDQYYDVAIAEQHSVTYAAGLAIGGLKPVVAIYSSFLQRGYDQFIHDVAIQNLPVMFAIDRAGIVGADGATHQGVFDLSFLRCIPNTVIMAPSNERECQLMLNTGYKLDGPSVVRYPRGNGTGEILPSVDETIELGKGVTILTATVIESQEQTNKSIAILSFGSMLGEAKKAALELNATLVDMRFVKPLDETLIDTLNAKHDCLVTVEDNAIAGGAGSGVNEYLLAQGKPVTILNIGVTDHFVKHGTQEEMHHELELDAEGIVIKIKRFIN.

Thiamine diphosphate is bound by residues histidine 80 and 121–123 (GHS). Aspartate 152 is a Mg(2+) binding site. Thiamine diphosphate contacts are provided by residues 153 to 154 (GA), asparagine 181, tyrosine 288, and glutamate 370. Position 181 (asparagine 181) interacts with Mg(2+).

It belongs to the transketolase family. DXPS subfamily. Homodimer. Mg(2+) serves as cofactor. It depends on thiamine diphosphate as a cofactor.

It carries out the reaction D-glyceraldehyde 3-phosphate + pyruvate + H(+) = 1-deoxy-D-xylulose 5-phosphate + CO2. It participates in metabolic intermediate biosynthesis; 1-deoxy-D-xylulose 5-phosphate biosynthesis; 1-deoxy-D-xylulose 5-phosphate from D-glyceraldehyde 3-phosphate and pyruvate: step 1/1. Its function is as follows. Catalyzes the acyloin condensation reaction between C atoms 2 and 3 of pyruvate and glyceraldehyde 3-phosphate to yield 1-deoxy-D-xylulose-5-phosphate (DXP). The polypeptide is 1-deoxy-D-xylulose-5-phosphate synthase (Colwellia psychrerythraea (strain 34H / ATCC BAA-681) (Vibrio psychroerythus)).